The following is a 142-amino-acid chain: Large ribosomal subunit protein uL13 (142 aa).

The protein belongs to the universal ribosomal protein uL13 family. In terms of assembly, part of the 50S ribosomal subunit.

Its function is as follows. This protein is one of the early assembly proteins of the 50S ribosomal subunit, although it is not seen to bind rRNA by itself. It is important during the early stages of 50S assembly. The sequence is that of Large ribosomal subunit protein uL13 from Nitrosococcus oceani (strain ATCC 19707 / BCRC 17464 / JCM 30415 / NCIMB 11848 / C-107).